Consider the following 54-residue polypeptide: Ovomucoid (54 aa).

The 51-residue stretch at 4–54 folds into the Kazal-like domain; the sequence is VNCSDYPKPVCSLLYMPLCGSDNKTYGNKCNFCNAVADSNGTLTLSHFGKC. 3 disulfide bridges follow: cysteine 6–cysteine 36, cysteine 14–cysteine 33, and cysteine 22–cysteine 54. Asparagine 43 carries an N-linked (GlcNAc...) asparagine glycan.

It is found in the secreted. The sequence is that of Ovomucoid from Geococcyx californianus (Greater roadrunner).